We begin with the raw amino-acid sequence, 162 residues long: Dihydrofolate reductase (162 aa).

Residues 3–161 enclose the DHFR domain; it reads KITLIAACAE…TSYAFVHYLR (159 aa). 7–9 contacts substrate; that stretch reads IAA. NADP(+) contacts are provided by residues 8–9 and 16–21; these read AA and IGAGNA. Substrate is bound at residue Asp29. 45–48 is a binding site for NADP(+); it reads GRKT. Position 60 (Arg60) interacts with substrate. Residues 65-68 and 98-103 each bind NADP(+); these read ISRQ and MGGAQI. Position 117 (Thr117) interacts with substrate.

The protein belongs to the dihydrofolate reductase family.

The enzyme catalyses (6S)-5,6,7,8-tetrahydrofolate + NADP(+) = 7,8-dihydrofolate + NADPH + H(+). Its pathway is cofactor biosynthesis; tetrahydrofolate biosynthesis; 5,6,7,8-tetrahydrofolate from 7,8-dihydrofolate: step 1/1. Functionally, key enzyme in folate metabolism. Catalyzes an essential reaction for de novo glycine and purine synthesis, and for DNA precursor synthesis. This chain is Dihydrofolate reductase (folA), found in Neisseria meningitidis serogroup A / serotype 4A (strain DSM 15465 / Z2491).